The primary structure comprises 203 residues: Putative 3-methyladenine DNA glycosylase (203 aa).

Belongs to the DNA glycosylase MPG family.

The polypeptide is Putative 3-methyladenine DNA glycosylase (Clostridium botulinum (strain Langeland / NCTC 10281 / Type F)).